Reading from the N-terminus, the 1438-residue chain is Membrane-anchored lipid-binding protein YSP2 (1438 aa).

The span at 1–17 (MRDEATRKKRSFSDGHF) shows a compositional bias: basic and acidic residues. Disordered stretches follow at residues 1 to 97 (MRDE…SHTP), 174 to 194 (KVKH…NERP), 200 to 219 (QKDD…SAPN), 285 to 308 (QQQH…QNPN), 338 to 418 (TSGP…KVKF), 455 to 485 (DENN…LGPK), and 505 to 543 (SQSN…RYSS). Topologically, residues 1-1277 (MRDEATRKKR…SAFSMLQQVN (1277 aa)) are cytoplasmic. S13 carries the phosphoserine modification. The span at 18 to 29 (FKKLKLMSRKKQ) shows a compositional bias: basic residues. The span at 30–44 (PVMERSKTTRTRKES) shows a compositional bias: basic and acidic residues. Residues 45 to 58 (TNSAAKSSLSLRRA) show a composition bias toward low complexity. Polar residues predominate over residues 74–97 (IGSTNEGVAGNSGSNSPAQYSHTP). 2 stretches are compositionally biased toward low complexity: residues 286-298 (QQHP…GPLP) and 374-398 (PTNT…ANSN). S411 is modified (phosphoserine). Over residues 455–470 (DENNTNNNPNASSTNL) the composition is skewed to low complexity. Positions 471–485 (SHISKSNVNNNLGPK) are enriched in polar residues. At S596 the chain carries Phosphoserine. Residues 648–716 (EFHTLFKDCD…KEIVQIEKKT (69 aa)) form the GRAM domain. The interval 777 to 843 (SSSAFFDDSD…LGPNKHSPTT (67 aa)) is disordered. Residues 783-800 (DDSDDNDDDGDLDDDDPD) show a composition bias toward acidic residues. The span at 818–832 (NESNDLGKNQKSTNY) shows a compositional bias: polar residues. In terms of domain architecture, VASt 1 spans 851–1018 (NDHLVIEANI…EIKKILSDED (168 aa)). Residue S1032 is modified to Phosphoserine. The VASt 2 domain occupies 1059–1225 (DDTVIDEKIN…DLKKIISNAS (167 aa)). Positions 1225–1257 (SSTKKKSRRRGKTVNKRKSSPSTIKNEKNEENF) are disordered. The segment covering 1227 to 1243 (TKKKSRRRGKTVNKRKS) has biased composition (basic residues). A helical transmembrane segment spans residues 1278-1298 (ITSVQGIMTIISFFICLIFFF). Residues 1299-1438 (RLLFHSKNTS…DNTSATNQLL (140 aa)) are Lumenal-facing. N-linked (GlcNAc...) asparagine glycosylation is found at N1306, N1373, and N1430.

This sequence belongs to the YSP2 family.

The protein localises to the mitochondrion membrane. It is found in the endoplasmic reticulum membrane. Its function is as follows. Involved in induction of programmed cell death in response to reactive oxygen species (ROS). May be involved in sterol transfer between intracellular membranes. This is Membrane-anchored lipid-binding protein YSP2 from Saccharomyces cerevisiae (strain ATCC 204508 / S288c) (Baker's yeast).